The following is a 172-amino-acid chain: uncharacterized protein (172 aa).

4 helical membrane passes run 1–21, 41–61, 72–92, and 136–156; these read MLFI…SLSI, NSTL…IEAN, QIGL…IYEL, and FCQA…ILAV.

Its subcellular location is the cell membrane. This is an uncharacterized protein from Haemophilus influenzae (strain ATCC 51907 / DSM 11121 / KW20 / Rd).